Here is a 185-residue protein sequence, read N- to C-terminus: Ribosome-recycling factor (185 aa).

It belongs to the RRF family.

The protein resides in the cytoplasm. Its function is as follows. Responsible for the release of ribosomes from messenger RNA at the termination of protein biosynthesis. May increase the efficiency of translation by recycling ribosomes from one round of translation to another. The polypeptide is Ribosome-recycling factor (Campylobacter jejuni subsp. jejuni serotype O:23/36 (strain 81-176)).